The following is a 273-amino-acid chain: Shikimate dehydrogenase (NADP(+)) (273 aa).

Shikimate contacts are provided by residues 19–21 (SQS) and Thr66. The Proton acceptor role is filled by Lys70. Position 82 (Glu82) interacts with NADP(+). 2 residues coordinate shikimate: Asn91 and Asp107. NADP(+)-binding positions include 131–135 (GAGGA) and Met217. Tyr219 is a shikimate binding site. Gly241 contributes to the NADP(+) binding site.

This sequence belongs to the shikimate dehydrogenase family. In terms of assembly, homodimer.

The enzyme catalyses shikimate + NADP(+) = 3-dehydroshikimate + NADPH + H(+). The protein operates within metabolic intermediate biosynthesis; chorismate biosynthesis; chorismate from D-erythrose 4-phosphate and phosphoenolpyruvate: step 4/7. Functionally, involved in the biosynthesis of the chorismate, which leads to the biosynthesis of aromatic amino acids. Catalyzes the reversible NADPH linked reduction of 3-dehydroshikimate (DHSA) to yield shikimate (SA). The sequence is that of Shikimate dehydrogenase (NADP(+)) from Buchnera aphidicola subsp. Schizaphis graminum (strain Sg).